A 127-amino-acid polypeptide reads, in one-letter code: Large ribosomal subunit protein bL17 (127 aa).

Belongs to the bacterial ribosomal protein bL17 family. As to quaternary structure, part of the 50S ribosomal subunit. Contacts protein L32.

The sequence is that of Large ribosomal subunit protein bL17 from Lactobacillus gasseri (strain ATCC 33323 / DSM 20243 / BCRC 14619 / CIP 102991 / JCM 1131 / KCTC 3163 / NCIMB 11718 / NCTC 13722 / AM63).